A 729-amino-acid polypeptide reads, in one-letter code: 1,4-alpha-glucan branching enzyme GlgB 2 (729 aa).

Residue Asp-408 is the Nucleophile of the active site. Glu-461 functions as the Proton donor in the catalytic mechanism.

The protein belongs to the glycosyl hydrolase 13 family. GlgB subfamily. Monomer.

The enzyme catalyses Transfers a segment of a (1-&gt;4)-alpha-D-glucan chain to a primary hydroxy group in a similar glucan chain.. It functions in the pathway glycan biosynthesis; glycogen biosynthesis. Catalyzes the formation of the alpha-1,6-glucosidic linkages in glycogen by scission of a 1,4-alpha-linked oligosaccharide from growing alpha-1,4-glucan chains and the subsequent attachment of the oligosaccharide to the alpha-1,6 position. The sequence is that of 1,4-alpha-glucan branching enzyme GlgB 2 from Xanthomonas campestris pv. campestris (strain 8004).